A 305-amino-acid polypeptide reads, in one-letter code: Acetyl-coenzyme A carboxylase carboxyl transferase subunit beta (305 aa).

Positions 25 to 293 constitute a CoA carboxyltransferase N-terminal domain; the sequence is LWVQCPACQQ…LPKVESVASL (269 aa). Residues cysteine 29, cysteine 32, cysteine 48, and cysteine 51 each contribute to the Zn(2+) site. The C4-type zinc-finger motif lies at 29 to 51; sequence CPACQQMIFARDLEKNQRVCTHC.

The protein belongs to the AccD/PCCB family. As to quaternary structure, acetyl-CoA carboxylase is a heterohexamer composed of biotin carboxyl carrier protein (AccB), biotin carboxylase (AccC) and two subunits each of ACCase subunit alpha (AccA) and ACCase subunit beta (AccD). Requires Zn(2+) as cofactor.

The protein localises to the cytoplasm. The enzyme catalyses N(6)-carboxybiotinyl-L-lysyl-[protein] + acetyl-CoA = N(6)-biotinyl-L-lysyl-[protein] + malonyl-CoA. It participates in lipid metabolism; malonyl-CoA biosynthesis; malonyl-CoA from acetyl-CoA: step 1/1. Its function is as follows. Component of the acetyl coenzyme A carboxylase (ACC) complex. Biotin carboxylase (BC) catalyzes the carboxylation of biotin on its carrier protein (BCCP) and then the CO(2) group is transferred by the transcarboxylase to acetyl-CoA to form malonyl-CoA. The sequence is that of Acetyl-coenzyme A carboxylase carboxyl transferase subunit beta from Granulibacter bethesdensis (strain ATCC BAA-1260 / CGDNIH1).